Reading from the N-terminus, the 295-residue chain is NAD kinase (295 aa).

Aspartate 72 acts as the Proton acceptor in catalysis. Residues aspartate 72–glycine 73, asparagine 146–aspartate 147, arginine 157, lysine 174, aspartate 176, threonine 187–serine 192, and glutamine 247 each bind NAD(+).

This sequence belongs to the NAD kinase family. A divalent metal cation serves as cofactor.

It localises to the cytoplasm. The enzyme catalyses NAD(+) + ATP = ADP + NADP(+) + H(+). In terms of biological role, involved in the regulation of the intracellular balance of NAD and NADP, and is a key enzyme in the biosynthesis of NADP. Catalyzes specifically the phosphorylation on 2'-hydroxyl of the adenosine moiety of NAD to yield NADP. The polypeptide is NAD kinase (Azotobacter vinelandii (strain DJ / ATCC BAA-1303)).